Here is a 159-residue protein sequence, read N- to C-terminus: Phosphopantetheine adenylyltransferase (159 aa).

His-16 contributes to the ATP binding site. Substrate-binding residues include Lys-40, Met-72, and Arg-86. Residues 87 to 89, Glu-97, and 122 to 128 each bind ATP; these read GLR and YQYLSAS.

This sequence belongs to the bacterial CoaD family. Homohexamer. The cofactor is Mg(2+).

It localises to the cytoplasm. The catalysed reaction is (R)-4'-phosphopantetheine + ATP + H(+) = 3'-dephospho-CoA + diphosphate. It participates in cofactor biosynthesis; coenzyme A biosynthesis; CoA from (R)-pantothenate: step 4/5. In terms of biological role, reversibly transfers an adenylyl group from ATP to 4'-phosphopantetheine, yielding dephospho-CoA (dPCoA) and pyrophosphate. The chain is Phosphopantetheine adenylyltransferase from Dehalococcoides mccartyi (strain ATCC BAA-2100 / JCM 16839 / KCTC 5957 / BAV1).